We begin with the raw amino-acid sequence, 79 residues long: ATP synthase subunit c (79 aa).

2 helical membrane passes run M11–L31 and F53–Y73.

It belongs to the ATPase C chain family. In terms of assembly, F-type ATPases have 2 components, F(1) - the catalytic core - and F(0) - the membrane proton channel. F(1) has five subunits: alpha(3), beta(3), gamma(1), delta(1), epsilon(1). F(0) has three main subunits: a(1), b(2) and c(10-14). The alpha and beta chains form an alternating ring which encloses part of the gamma chain. F(1) is attached to F(0) by a central stalk formed by the gamma and epsilon chains, while a peripheral stalk is formed by the delta and b chains.

The protein localises to the cell inner membrane. In terms of biological role, f(1)F(0) ATP synthase produces ATP from ADP in the presence of a proton or sodium gradient. F-type ATPases consist of two structural domains, F(1) containing the extramembraneous catalytic core and F(0) containing the membrane proton channel, linked together by a central stalk and a peripheral stalk. During catalysis, ATP synthesis in the catalytic domain of F(1) is coupled via a rotary mechanism of the central stalk subunits to proton translocation. Its function is as follows. Key component of the F(0) channel; it plays a direct role in translocation across the membrane. A homomeric c-ring of between 10-14 subunits forms the central stalk rotor element with the F(1) delta and epsilon subunits. The polypeptide is ATP synthase subunit c (Serratia proteamaculans (strain 568)).